A 117-amino-acid polypeptide reads, in one-letter code: uncharacterized protein (117 aa).

Positions 16–56 (FSQSSDGRSNGGGSSSGDSVSTTSDGLLTTGTSPNTSSTSL) are disordered. The span at 31–56 (SGDSVSTTSDGLLTTGTSPNTSSTSL) shows a compositional bias: low complexity.

This is an uncharacterized protein from Saccharomyces cerevisiae (strain ATCC 204508 / S288c) (Baker's yeast).